The sequence spans 197 residues: Molybdenum cofactor guanylyltransferase (197 aa).

GTP-binding positions include 10–12, Lys23, Asp69, and Asp99; that span reads LAG. Asp99 serves as a coordination point for Mg(2+).

The protein belongs to the MobA family. As to quaternary structure, monomer. Mg(2+) serves as cofactor.

The protein resides in the cytoplasm. The catalysed reaction is Mo-molybdopterin + GTP + H(+) = Mo-molybdopterin guanine dinucleotide + diphosphate. Transfers a GMP moiety from GTP to Mo-molybdopterin (Mo-MPT) cofactor (Moco or molybdenum cofactor) to form Mo-molybdopterin guanine dinucleotide (Mo-MGD) cofactor. The sequence is that of Molybdenum cofactor guanylyltransferase from Serratia proteamaculans (strain 568).